A 524-amino-acid polypeptide reads, in one-letter code: Probable lipid II flippase MurJ (524 aa).

Helical transmembrane passes span 44-64, 103-123, 146-166, 172-192, 195-215, 250-270, 284-304, 322-342, 367-387, 396-416, 420-440, 456-476, and 494-514; these read IFGA…PNLL, LLTL…PWVI, ITFP…ILNT, IPAF…LFAA, FNPP…LQLV, ILGV…ASFL, LMEF…LPSL, WGLR…GILA, LIAY…APGF, PVKI…AFIG, HAGL…LLYW, WFLM…FGVL, and LMAV…VLGF.

It belongs to the MurJ/MviN family.

The protein resides in the cell inner membrane. It functions in the pathway cell wall biogenesis; peptidoglycan biosynthesis. Involved in peptidoglycan biosynthesis. Transports lipid-linked peptidoglycan precursors from the inner to the outer leaflet of the cytoplasmic membrane. This is Probable lipid II flippase MurJ from Salmonella typhimurium (strain LT2 / SGSC1412 / ATCC 700720).